The sequence spans 338 residues: Anthranilate phosphoribosyltransferase (338 aa).

Residues Gly-81, 84 to 85 (GD), Thr-89, 91 to 94 (NIST), 109 to 117 (KHGNRNLSS), and Ala-121 each bind 5-phospho-alpha-D-ribose 1-diphosphate. Anthranilate is bound at residue Gly-81. Ser-93 provides a ligand contact to Mg(2+). Asn-112 contributes to the anthranilate binding site. Arg-167 serves as a coordination point for anthranilate. Residues Asp-226 and Glu-227 each contribute to the Mg(2+) site.

This sequence belongs to the anthranilate phosphoribosyltransferase family. Homodimer. Requires Mg(2+) as cofactor.

It catalyses the reaction N-(5-phospho-beta-D-ribosyl)anthranilate + diphosphate = 5-phospho-alpha-D-ribose 1-diphosphate + anthranilate. Its pathway is amino-acid biosynthesis; L-tryptophan biosynthesis; L-tryptophan from chorismate: step 2/5. Its function is as follows. Catalyzes the transfer of the phosphoribosyl group of 5-phosphorylribose-1-pyrophosphate (PRPP) to anthranilate to yield N-(5'-phosphoribosyl)-anthranilate (PRA). The protein is Anthranilate phosphoribosyltransferase of Cereibacter sphaeroides (strain KD131 / KCTC 12085) (Rhodobacter sphaeroides).